The sequence spans 544 residues: CTP synthase (544 aa).

The segment at 1-265 (MARFIFITGG…DEAVLSAFGI (265 aa)) is amidoligase domain. Position 13 (S13) interacts with CTP. A UTP-binding site is contributed by S13. 14–19 (SLGKGL) is an ATP binding site. Y54 serves as a coordination point for L-glutamine. D71 contributes to the ATP binding site. Residues D71 and E139 each coordinate Mg(2+). Residues 146-148 (DIE), 186-191 (KTKPTQ), and K222 contribute to the CTP site. UTP-binding positions include 186-191 (KTKPTQ) and K222. One can recognise a Glutamine amidotransferase type-1 domain in the interval 291 to 543 (TIGVVGKYVG…IAAALQQSRL (253 aa)). G355 lines the L-glutamine pocket. The active-site Nucleophile; for glutamine hydrolysis is the C382. Residues 383 to 386 (LGMQ), E406, and R471 each bind L-glutamine. Catalysis depends on residues H516 and E518.

Belongs to the CTP synthase family. As to quaternary structure, homotetramer.

The catalysed reaction is UTP + L-glutamine + ATP + H2O = CTP + L-glutamate + ADP + phosphate + 2 H(+). It catalyses the reaction L-glutamine + H2O = L-glutamate + NH4(+). It carries out the reaction UTP + NH4(+) + ATP = CTP + ADP + phosphate + 2 H(+). It participates in pyrimidine metabolism; CTP biosynthesis via de novo pathway; CTP from UDP: step 2/2. Its activity is regulated as follows. Allosterically activated by GTP, when glutamine is the substrate; GTP has no effect on the reaction when ammonia is the substrate. The allosteric effector GTP functions by stabilizing the protein conformation that binds the tetrahedral intermediate(s) formed during glutamine hydrolysis. Inhibited by the product CTP, via allosteric rather than competitive inhibition. In terms of biological role, catalyzes the ATP-dependent amination of UTP to CTP with either L-glutamine or ammonia as the source of nitrogen. Regulates intracellular CTP levels through interactions with the four ribonucleotide triphosphates. The chain is CTP synthase from Rhizorhabdus wittichii (strain DSM 6014 / CCUG 31198 / JCM 15750 / NBRC 105917 / EY 4224 / RW1) (Sphingomonas wittichii).